Consider the following 440-residue polypeptide: Xaa-Pro dipeptidase (440 aa).

Residues Asp244, Asp255, His335, Glu380, and Glu419 each contribute to the Mn(2+) site.

The protein belongs to the peptidase M24B family. Bacterial-type prolidase subfamily. Mn(2+) is required as a cofactor.

The enzyme catalyses Xaa-L-Pro dipeptide + H2O = an L-alpha-amino acid + L-proline. Functionally, splits dipeptides with a prolyl residue in the C-terminal position. This is Xaa-Pro dipeptidase from Shewanella denitrificans (strain OS217 / ATCC BAA-1090 / DSM 15013).